The sequence spans 321 residues: Beta-ketoacyl-[acyl-carrier-protein] synthase III (321 aa).

Active-site residues include C114 and H248. The tract at residues 249-253 (QANKR) is ACP-binding. The active site involves N278.

This sequence belongs to the thiolase-like superfamily. FabH family. As to quaternary structure, homodimer.

It is found in the cytoplasm. The enzyme catalyses malonyl-[ACP] + acetyl-CoA + H(+) = 3-oxobutanoyl-[ACP] + CO2 + CoA. It functions in the pathway lipid metabolism; fatty acid biosynthesis. Its function is as follows. Catalyzes the condensation reaction of fatty acid synthesis by the addition to an acyl acceptor of two carbons from malonyl-ACP. Catalyzes the first condensation reaction which initiates fatty acid synthesis and may therefore play a role in governing the total rate of fatty acid production. Possesses both acetoacetyl-ACP synthase and acetyl transacylase activities. Its substrate specificity determines the biosynthesis of branched-chain and/or straight-chain of fatty acids. The chain is Beta-ketoacyl-[acyl-carrier-protein] synthase III from Sphingopyxis alaskensis (strain DSM 13593 / LMG 18877 / RB2256) (Sphingomonas alaskensis).